Here is a 409-residue protein sequence, read N- to C-terminus: Putative competence-damage inducible protein (409 aa).

This sequence belongs to the CinA family.

The polypeptide is Putative competence-damage inducible protein (Clostridium botulinum (strain ATCC 19397 / Type A)).